Reading from the N-terminus, the 209-residue chain is Uridine kinase (209 aa).

12–19 (GGSGGGKT) is an ATP binding site.

The protein belongs to the uridine kinase family.

The protein resides in the cytoplasm. It catalyses the reaction uridine + ATP = UMP + ADP + H(+). The catalysed reaction is cytidine + ATP = CMP + ADP + H(+). It participates in pyrimidine metabolism; CTP biosynthesis via salvage pathway; CTP from cytidine: step 1/3. The protein operates within pyrimidine metabolism; UMP biosynthesis via salvage pathway; UMP from uridine: step 1/1. The chain is Uridine kinase from Streptococcus agalactiae serotype III (strain NEM316).